A 541-amino-acid chain; its full sequence is RING finger protein 37 (541 aa).

The U-box domain occupies 258–338 (DVPEEFLDPI…DHFLLQHSIP (81 aa)). At Arg451 the chain carries Asymmetric dimethylarginine. An RING-type zinc finger spans residues 483 to 528 (CASCKRVFSPYFKKEPVYQLPCGHLLCRPCLGEKQRSLPMTCTACQ).

In terms of assembly, interacts with UBE2L3. Interacts with VCP. Expressed in liver, heart, brain, kidney and testis.

It is found in the nucleus. It carries out the reaction S-ubiquitinyl-[E2 ubiquitin-conjugating enzyme]-L-cysteine + [acceptor protein]-L-lysine = [E2 ubiquitin-conjugating enzyme]-L-cysteine + N(6)-ubiquitinyl-[acceptor protein]-L-lysine.. It participates in protein modification; protein ubiquitination. May have a ubiquitin-protein ligase activity acting as an E3 ubiquitin-protein ligase or as a ubiquitin-ubiquitin ligase promoting elongation of ubiquitin chains on substrates. The sequence is that of RING finger protein 37 from Homo sapiens (Human).